Here is a 290-residue protein sequence, read N- to C-terminus: MTSIAVIGPGAVGGTLAAWLAQKPDHVVTVCVRTPFEALAVETPEGAISATPRVATSPESLAPVDWVLVTTKTYDTDATWTWLDALVGPQTRVAILRNGVEHVAPFVGKIAAERLVPAVVDIPAERSAPGRMLQRRNGWIKVPVGPAGEAFAALFAHTPIELHVVEDFVTEAWKKLALNCAGAVNALVLKPAGIAHDEGAAQVMRSLVRECVAVGRAEGADLSDDLPDQVIAGYRAADPGSVNSLHADRAAGRAMELDARNGVIVRRGAAHGIATPANAMVVALLNAAAL.

Residues 8-13, asparagine 98, and alanine 124 contribute to the NADP(+) site; that span reads GPGAVG. Position 98 (asparagine 98) interacts with substrate. Lysine 175 (proton donor) is an active-site residue. Asparagine 179 and serine 244 together coordinate substrate. Glutamate 256 contributes to the NADP(+) binding site.

The protein belongs to the ketopantoate reductase family.

It localises to the cytoplasm. It catalyses the reaction (R)-pantoate + NADP(+) = 2-dehydropantoate + NADPH + H(+). It functions in the pathway cofactor biosynthesis; (R)-pantothenate biosynthesis; (R)-pantoate from 3-methyl-2-oxobutanoate: step 2/2. In terms of biological role, catalyzes the NADPH-dependent reduction of ketopantoate into pantoic acid. The polypeptide is 2-dehydropantoate 2-reductase (Caulobacter vibrioides (strain ATCC 19089 / CIP 103742 / CB 15) (Caulobacter crescentus)).